Here is a 211-residue protein sequence, read N- to C-terminus: SsrA-binding protein (211 aa).

The interval 168-211 (KHRLRRPRAQRNTQRSVTPRRTRENKNVRGSKARSARRNVRREN) is disordered. The segment covering 177 to 186 (QRNTQRSVTP) has biased composition (polar residues). The span at 196–211 (RGSKARSARRNVRREN) shows a compositional bias: basic residues.

Belongs to the SmpB family.

It localises to the cytoplasm. Functionally, required for rescue of stalled ribosomes mediated by trans-translation. Binds to transfer-messenger RNA (tmRNA), required for stable association of tmRNA with ribosomes. tmRNA and SmpB together mimic tRNA shape, replacing the anticodon stem-loop with SmpB. tmRNA is encoded by the ssrA gene; the 2 termini fold to resemble tRNA(Ala) and it encodes a 'tag peptide', a short internal open reading frame. During trans-translation Ala-aminoacylated tmRNA acts like a tRNA, entering the A-site of stalled ribosomes, displacing the stalled mRNA. The ribosome then switches to translate the ORF on the tmRNA; the nascent peptide is terminated with the 'tag peptide' encoded by the tmRNA and targeted for degradation. The ribosome is freed to recommence translation, which seems to be the essential function of trans-translation. The sequence is that of SsrA-binding protein from Tropheryma whipplei (strain Twist) (Whipple's bacillus).